Consider the following 208-residue polypeptide: Putative archaetidylserine decarboxylase proenzyme (208 aa).

Ser-172 acts as the Schiff-base intermediate with substrate; via pyruvic acid in catalysis. Ser-172 bears the Pyruvic acid (Ser); by autocatalysis mark.

This sequence belongs to the phosphatidylserine decarboxylase family. PSD-A subfamily. As to quaternary structure, heterodimer of a large membrane-associated beta subunit and a small pyruvoyl-containing alpha subunit. Pyruvate is required as a cofactor. Is synthesized initially as an inactive proenzyme. Formation of the active enzyme involves a self-maturation process in which the active site pyruvoyl group is generated from an internal serine residue via an autocatalytic post-translational modification. Two non-identical subunits are generated from the proenzyme in this reaction, and the pyruvate is formed at the N-terminus of the alpha chain, which is derived from the carboxyl end of the proenzyme. The post-translation cleavage follows an unusual pathway, termed non-hydrolytic serinolysis, in which the side chain hydroxyl group of the serine supplies its oxygen atom to form the C-terminus of the beta chain, while the remainder of the serine residue undergoes an oxidative deamination to produce ammonia and the pyruvoyl prosthetic group on the alpha chain.

Its subcellular location is the cell membrane. It carries out the reaction archaetidylserine + H(+) = archaetidylethanolamine + CO2. Its function is as follows. Catalyzes the formation of archaetidylethanolamine (PtdEtn) from archaetidylserine (PtdSer). This is Putative archaetidylserine decarboxylase proenzyme from Methanosarcina acetivorans (strain ATCC 35395 / DSM 2834 / JCM 12185 / C2A).